An 886-amino-acid chain; its full sequence is Alanine--tRNA ligase (886 aa).

Positions 564, 568, 666, and 670 each coordinate Zn(2+).

Belongs to the class-II aminoacyl-tRNA synthetase family. Zn(2+) is required as a cofactor.

It is found in the cytoplasm. The catalysed reaction is tRNA(Ala) + L-alanine + ATP = L-alanyl-tRNA(Ala) + AMP + diphosphate. Catalyzes the attachment of alanine to tRNA(Ala) in a two-step reaction: alanine is first activated by ATP to form Ala-AMP and then transferred to the acceptor end of tRNA(Ala). Also edits incorrectly charged Ser-tRNA(Ala) and Gly-tRNA(Ala) via its editing domain. The sequence is that of Alanine--tRNA ligase from Prochlorococcus marinus (strain MIT 9301).